The chain runs to 248 residues: uncharacterized protein (248 aa).

9 to 33 (IITGASSGIGKATALLLAEKGAKLV) is an NADP(+) binding site. Ser-141 serves as a coordination point for substrate. Tyr-154 serves as the catalytic Proton acceptor.

It belongs to the short-chain dehydrogenases/reductases (SDR) family.

This is an uncharacterized protein from Listeria monocytogenes serovar 1/2a (strain ATCC BAA-679 / EGD-e).